A 406-amino-acid polypeptide reads, in one-letter code: MHFQVILMMMWLWLEAEGGTCPTLYKRYSKHHTYCLHPNSTCKILTRGVSSGDKEIILREHNKLRSRVATGKETKYSLPKASDMMQLVWDDELASVAQKHADQCVFEHDCNDCRNVQNFGVGQNLHLRTSSAKFSDITWAGAVNGWYDEVKDFNKRQISGFIDGKGPPQTGHFTQAVWATSWRVGCGRSMFKDGNTFKDLYTCNYGPGGNMKNAIIYTKGKPCSGCPLNSCCGKACGGISYDGLCKMSGNTAPQYSPPKGFAFRCTFNGESDCATTTSGAKKWKTIKTLSGSFIGIVLNPGESSTLSFTVPFGVSDGSMCVESYYRKGPQVAGQVAAGNAVEKFGDPADPSFDYSTPLKESTDFMQFGVTLGWNTKTTLSVVFSVPPGTAPQYLEMKDISVRKGEC.

The N-terminal stretch at 1–18 (MHFQVILMMMWLWLEAEG) is a signal peptide. N-linked (GlcNAc...) asparagine glycosylation occurs at Asn-39. Positions 58–205 (LREHNKLRSR…TFKDLYTCNY (148 aa)) constitute an SCP domain.

This sequence belongs to the CRISP family. Post-translationally, contains 9 disulfide bonds. In terms of tissue distribution, expressed by the venom gland.

The protein localises to the secreted. The protein is CRISP/Allergen/PR-1 of Trittame loki (Brush-footed trapdoor spider).